The following is a 440-amino-acid chain: Streptokinase (440 aa).

An N-terminal signal peptide occupies residues M1 to A26. The interval P72 to G94 is disordered.

Functionally, this protein is not a protease, but it activates plasminogen by complexing with it. As a potential virulence factor, it is thought to prevent the formation of effective fibrin barriers around the site of infection, thereby contributing to the invasiveness of the cells. In Streptococcus pyogenes, this protein is Streptokinase (ska).